Reading from the N-terminus, the 470-residue chain is Pyruvate kinase I (470 aa).

R32 serves as a coordination point for substrate. The K(+) site is built by N34, S36, D66, and T67. 34–37 (NFSH) lines the ATP pocket. R73 lines the ATP pocket. The residue at position 76 (K76) is an N6-acetyllysine. ATP is bound at residue K156. E222 lines the Mg(2+) pocket. Residues G245, D246, and T278 each contribute to the substrate site. D246 contributes to the Mg(2+) binding site. An N6-acetyllysine modification is found at K319.

It belongs to the pyruvate kinase family. Homotetramer. Requires Mg(2+) as cofactor. K(+) is required as a cofactor.

The catalysed reaction is pyruvate + ATP = phosphoenolpyruvate + ADP + H(+). The protein operates within carbohydrate degradation; glycolysis; pyruvate from D-glyceraldehyde 3-phosphate: step 5/5. The polypeptide is Pyruvate kinase I (pykF) (Escherichia coli O157:H7).